We begin with the raw amino-acid sequence, 226 residues long: SURF1-like protein (226 aa).

The next 2 membrane-spanning stretches (helical) occupy residues 3–23 (TNLVVLITFTILISLGFWQLS) and 199–219 (LEYALTWFGLAISLIVIYVIY).

The protein belongs to the SURF1 family.

It is found in the cell membrane. The chain is SURF1-like protein from Rickettsia felis (strain ATCC VR-1525 / URRWXCal2) (Rickettsia azadi).